Reading from the N-terminus, the 453-residue chain is Acid phosphatase (453 aa).

The first 18 residues, 1-18, serve as a signal peptide directing secretion; the sequence is MFLQNLFLGFLAVVCANA. The active-site Nucleophile is the His-69. 6 N-linked (GlcNAc...) asparagine glycosylation sites follow: Asn-95, Asn-151, Asn-183, Asn-193, Asn-243, and Asn-319. Asp-331 functions as the Proton donor in the catalytic mechanism. Residues Asn-410, Asn-429, and Asn-443 are each glycosylated (N-linked (GlcNAc...) asparagine).

The protein belongs to the histidine acid phosphatase family.

It is found in the secreted. Its subcellular location is the cell wall. It carries out the reaction a phosphate monoester + H2O = an alcohol + phosphate. This is Acid phosphatase (pho1) from Schizosaccharomyces pombe (strain 972 / ATCC 24843) (Fission yeast).